We begin with the raw amino-acid sequence, 198 residues long: Nucleoid occlusion factor SlmA (198 aa).

Residues 9-70 enclose the HTH tetR-type domain; it reads RNRREEILQA…SLIEFIEDSL (62 aa). Residues 33-52 constitute a DNA-binding region (H-T-H motif); that stretch reads TTAKLAANVGVSEAALYRHF. The stretch at 119 to 144 forms a coiled coil; it reads DRLQGRINQLFERIEVQLRQVLREKK.

It belongs to the nucleoid occlusion factor SlmA family. In terms of assembly, homodimer. Interacts with FtsZ.

It localises to the cytoplasm. The protein resides in the nucleoid. Its function is as follows. Required for nucleoid occlusion (NO) phenomenon, which prevents Z-ring formation and cell division over the nucleoid. Acts as a DNA-associated cell division inhibitor that binds simultaneously chromosomal DNA and FtsZ, and disrupts the assembly of FtsZ polymers. SlmA-DNA-binding sequences (SBS) are dispersed on non-Ter regions of the chromosome, preventing FtsZ polymerization at these regions. This Yersinia enterocolitica serotype O:8 / biotype 1B (strain NCTC 13174 / 8081) protein is Nucleoid occlusion factor SlmA.